Consider the following 361-residue polypeptide: Peptide chain release factor 1 (361 aa).

Glutamine 236 carries the N5-methylglutamine modification. Positions 285-309 (TAKDSARAADRKAQVGSGDRSERIR) are enriched in basic and acidic residues. The interval 285 to 313 (TAKDSARAADRKAQVGSGDRSERIRTYNF) is disordered.

This sequence belongs to the prokaryotic/mitochondrial release factor family. Post-translationally, methylated by PrmC. Methylation increases the termination efficiency of RF1.

The protein resides in the cytoplasm. Its function is as follows. Peptide chain release factor 1 directs the termination of translation in response to the peptide chain termination codons UAG and UAA. The sequence is that of Peptide chain release factor 1 from Methylorubrum populi (strain ATCC BAA-705 / NCIMB 13946 / BJ001) (Methylobacterium populi).